Consider the following 155-residue polypeptide: Small ribosomal subunit protein uS9 (155 aa).

The protein belongs to the universal ribosomal protein uS9 family.

This is Small ribosomal subunit protein uS9 from Sinorhizobium fredii (strain NBRC 101917 / NGR234).